The sequence spans 976 residues: Protein phosphatase 1 regulatory subunit 12B (976 aa).

Positions 1–24 are enriched in basic and acidic residues; it reads MAELEHLGGKRAESARARRAEQLR. The segment at 1–52 is disordered; the sequence is MAELEHLGGKRAESARARRAEQLRRWRGSLTEQEPAERQGAGRQLQTRRGSP. S29 bears the Phosphoserine mark. ANK repeat units lie at residues 57–86, 90–119, 123–152, 216–245, and 249–278; these read EDGAVFLAACSSGDTDEVKKLLARGADINT, DGLTALHQACIDENLDMVKFLVENRANVNQ, EGWTPLHAAASCGYLNIAEYFISHGASVGI, SGATALHVAAAKGYSEVLRLLIQAGYELNV, and DGWTPLHAAAHWGVKEACSILAEALCDMDI. A disordered region spans residues 342–489; it reads EEIPKSQDTE…LDDKDKEREN (148 aa). Residues 362–374 show a composition bias toward acidic residues; it reads SEEEEGEDEVSES. The segment covering 375 to 385 has biased composition (basic and acidic residues); that stretch reads ETEKEADKKPE. Residues 411 to 423 are compositionally biased toward low complexity; that stretch reads FSASSARRLSSLF. T444 is subject to Phosphothreonine. A compositionally biased stretch (low complexity) spans 465–477; the sequence is SSIYRSSSSPRIS. A compositionally biased stretch (basic and acidic residues) spans 480-489; it reads LDDKDKEREN. S502 bears the Phosphoserine mark. A disordered region spans residues 503–873; it reads STSDIEEKEN…LTSRVEEDSN (371 aa). Residues 538 to 564 are compositionally biased toward polar residues; sequence ETPQTIAPSTYTSTYLKRTPYKSQADS. Residues 622–631 are compositionally biased toward basic and acidic residues; the sequence is VRDEEAESLR. Over residues 632 to 642 the composition is skewed to basic residues; it reads KARSRQARQTR. Phosphothreonine is present on T645. A compositionally biased stretch (basic and acidic residues) spans 655-679; sequence EAEKTFSRSRAERQAQEQPGEKLED. Polar residues-rich tracts occupy residues 722–739 and 747–763; these read DKPTTPVSPSASRPSLYT and SRASGPDSENSETSTHA. The segment covering 765 to 777 has biased composition (basic and acidic residues); sequence AAKEMDTSEKGEA. Residues 791-801 show a composition bias toward basic residues; sequence ERRRAKDRRRG. The residue at position 802 (T802) is a Phosphothreonine. Residues 818–830 show a composition bias toward basic and acidic residues; sequence EEVKEALHERLSR. A Phosphoserine modification is found at S833. Residues 844–860 show a composition bias toward basic and acidic residues; the sequence is YSDRASARARREAREAR. Phosphoserine is present on S941.

PP1 comprises a catalytic subunit, PPP1CA, PPP1CB or PPP1CC, and one or several targeting or regulatory subunits. PPP1R12B mediates binding to myosin. Isoform 3 and isoform 4 bind PPP1R12A, but not isoform 1 of PPP1R12B itself. Binds IL16.

The protein resides in the cytoplasm. It is found in the cytoskeleton. Its subcellular location is the stress fiber. Regulates myosin phosphatase activity. Augments Ca(2+) sensitivity of the contractile apparatus. The protein is Protein phosphatase 1 regulatory subunit 12B (Ppp1r12b) of Mus musculus (Mouse).